Reading from the N-terminus, the 166-residue chain is Small ribosomal subunit protein uS5 (166 aa).

Positions 12-75 (YIEKLVQVNR…EAARRNMIQV (64 aa)) constitute an S5 DRBM domain.

It belongs to the universal ribosomal protein uS5 family. In terms of assembly, part of the 30S ribosomal subunit. Contacts proteins S4 and S8.

In terms of biological role, with S4 and S12 plays an important role in translational accuracy. Functionally, located at the back of the 30S subunit body where it stabilizes the conformation of the head with respect to the body. The protein is Small ribosomal subunit protein uS5 of Pseudomonas savastanoi pv. phaseolicola (strain 1448A / Race 6) (Pseudomonas syringae pv. phaseolicola (strain 1448A / Race 6)).